The following is a 106-amino-acid chain: UPF0060 membrane protein R01043 (106 aa).

Helical transmembrane passes span 5–25 (AIYFLAALAEITGCFAFWSWL), 31–51 (ALWLIPGMASLALFAWLLTMV), 61–81 (AAYGGVYIVASLSWLWLAEGV), and 85–105 (HWDMTGAAVALAGSAIILAGP).

It belongs to the UPF0060 family.

It is found in the cell inner membrane. The polypeptide is UPF0060 membrane protein R01043 (Rhizobium meliloti (strain 1021) (Ensifer meliloti)).